Consider the following 68-residue polypeptide: Sperm-associated antigen 11A (68 aa).

The N-terminal stretch at 1–19 (MKVLLLFAVFFCLVQRNSG) is a signal peptide. 3 disulfide bridges follow: cysteine 30-cysteine 59, cysteine 37-cysteine 52, and cysteine 42-cysteine 60.

The protein belongs to the beta-defensin family. In terms of tissue distribution, only expressed in epididymis (middle part of the caput).

The protein localises to the secreted. Functionally, has antimicrobial activity against E.coli. Plays a role in the defense response in the male reproductive tract, contributing to sperm maturation, storage and protection. The sequence is that of Sperm-associated antigen 11A from Rattus norvegicus (Rat).